The following is a 79-amino-acid chain: Protein OPG081 (79 aa).

The Intravirion portion of the chain corresponds to 2–8 (VDAITVL). Residues 9–29 (TAIGITVLMLLMVISGAALIV) form a helical membrane-spanning segment. At 30–47 (KELNPNDIFTMQSLKFNR) the chain is on the virion surface side. Residues 48–68 (AVTIFKYIGLFIYIPGTIILY) traverse the membrane as a helical segment. The Intravirion segment spans residues 69–79 (ATYVKSLLMKS).

The protein belongs to the orthopoxvirus OPG081 family.

It localises to the virion membrane. Its function is as follows. Envelope protein. This is Protein OPG081 (OPG081) from Vaccinia virus (strain Western Reserve) (VACV).